Reading from the N-terminus, the 410-residue chain is Elongation factor Tu, chloroplastic (410 aa).

The tr-type G domain maps to 10 to 215; sequence KPHVNIGTIG…NVDSYIPTPE (206 aa). Residues 19–26 form a G1 region; the sequence is GHVDHGKT. 19 to 26 serves as a coordination point for GTP; it reads GHVDHGKT. Mg(2+) is bound at residue T26. Positions 61–65 are G2; it reads GITIN. The segment at 82–85 is G3; it reads DCPG. GTP is bound by residues 82–86 and 137–140; these read DCPGH and NKKD. The G4 stretch occupies residues 137 to 140; sequence NKKD. The tract at residues 175–177 is G5; that stretch reads SAL.

Belongs to the TRAFAC class translation factor GTPase superfamily. Classic translation factor GTPase family. EF-Tu/EF-1A subfamily.

Its subcellular location is the plastid. The protein resides in the chloroplast. The enzyme catalyses GTP + H2O = GDP + phosphate + H(+). GTP hydrolase that promotes the GTP-dependent binding of aminoacyl-tRNA to the A-site of ribosomes during protein biosynthesis. This chain is Elongation factor Tu, chloroplastic (tufA), found in Oltmannsiellopsis viridis (Marine flagellate).